The following is a 210-amino-acid chain: Probable membrane protein Rv1733c (210 aa).

Helical transmembrane passes span 43–63 and 165–185; these read AVVMLLAVTVSLLTIPFAAAA and ALAALGLWLSVAAVAGALLAL.

It is found in the cell membrane. The protein is Probable membrane protein Rv1733c of Mycobacterium tuberculosis (strain ATCC 25618 / H37Rv).